Here is a 219-residue protein sequence, read N- to C-terminus: 3-dehydroquinate dehydratase (219 aa).

Residues S10, 29–31 (EVR), and R59 each bind 3-dehydroquinate. Catalysis depends on H116, which acts as the Proton donor/acceptor. K142 (schiff-base intermediate with substrate) is an active-site residue. Residues R180 and Q203 each contribute to the 3-dehydroquinate site.

It belongs to the type-I 3-dehydroquinase family. Homodimer.

The enzyme catalyses 3-dehydroquinate = 3-dehydroshikimate + H2O. It functions in the pathway metabolic intermediate biosynthesis; chorismate biosynthesis; chorismate from D-erythrose 4-phosphate and phosphoenolpyruvate: step 3/7. In terms of biological role, involved in the third step of the chorismate pathway, which leads to the biosynthesis of aromatic amino acids. Catalyzes the cis-dehydration of 3-dehydroquinate (DHQ) and introduces the first double bond of the aromatic ring to yield 3-dehydroshikimate. In Methanocella arvoryzae (strain DSM 22066 / NBRC 105507 / MRE50), this protein is 3-dehydroquinate dehydratase.